We begin with the raw amino-acid sequence, 473 residues long: Hyaluronidase-2 (473 aa).

Residues 1-20 (MWTGLGPAVTLALVLVVAWA) form the signal peptide. 2 disulfides stabilise this stretch: C47–C343 and C214–C230. N-linked (GlcNAc...) asparagine glycosylation is found at N77 and N106. E138 (proton donor) is an active-site residue. Residues N340 and N360 are each glycosylated (N-linked (GlcNAc...) asparagine). An EGF-like domain is found at 364–442 (AAQYCSWAQC…YLGWGGEQCQ (79 aa)). Disulfide bonds link C368–C379, C373–C430, and C432–C441. A lipid anchor (GPI-anchor amidated glycine) is attached at G451. The propeptide at 452 to 473 (ASGAWAGSHLTGLLAVAVLAFT) is removed in mature form.

It belongs to the glycosyl hydrolase 56 family. As to quaternary structure, interacts with MST1R.

The protein resides in the cell membrane. It catalyses the reaction Random hydrolysis of (1-&gt;4)-linkages between N-acetyl-beta-D-glucosamine and D-glucuronate residues in hyaluronate.. Functionally, catalyzes hyaluronan degradation into small fragments that are endocytosed and degraded in lysosomes by HYAL1 and exoglycosidases. Essential for the breakdown of extracellular matrix hyaluronan. This is Hyaluronidase-2 (HYAL2) from Bos taurus (Bovine).